Consider the following 727-residue polypeptide: MPVLPDRQVINQLISGHYGDPFSILGMHETSQGLQVCALLPDAQEVWLVETENGRRIAQLTLEDPRGFFIAQLTRRKKSFRYQFAVTWQENPQIIDDPYRFGPLLQDIDSWLLAEGTHLRPYERLGAHLMRLDGVPGVSFAVWAPNAQRVSVVGDFNFWDGRRHPMRLRRENGIWELFLPGIEAGQLYKFEIIDCHGQVRLKADPYAFEAQMRPETASLISPLPDVVKSSAARQKANDLCSPVSIYEVHLGSWRRHTDNNFWLSYRELADQLVEYVKYMGFTHVELLPINEHPFDGSWGYQPLGLYAPTRRYGTPEDFKAFVAKFHQAGINVILDWVPGHFPSDEHGLSTFDGTALYEYADPREGYHQDWNTLIYNYGRNEVRNYLAGNAFYWMERFGIDALRIDAVASMIYRDYSRAEGQWVPNYYGGRENLEAIAFLRYTNKTIGVERPGSVTMAEESTDFPGVTLPPDIGGLGFNYKWNMGWMHDTLNYMQCDPVHRKYHHNLMTFGMLYAYTENFILPLSHDEVVHGKRSILDRMPGDAWQKFANLRAYYAFMWAHPGKKLLFMGCEFAQGREWNFETSLDWHLLDDENGWHSGVQRLVRDLNHCYRQYAPLYEWDYQPAGFEWLVVDDHENSVFAFLRRDAEGHELIAISNFTPVPRYHYRVGIPQGGHYREVLNSDSAFYCGSNLGNQGGIDSHHVRSHNHEHSLLLTLPPLATIYLLREN.

D405 functions as the Nucleophile in the catalytic mechanism. The active-site Proton donor is the E458.

Belongs to the glycosyl hydrolase 13 family. GlgB subfamily. Monomer.

The catalysed reaction is Transfers a segment of a (1-&gt;4)-alpha-D-glucan chain to a primary hydroxy group in a similar glucan chain.. Its pathway is glycan biosynthesis; glycogen biosynthesis. In terms of biological role, catalyzes the formation of the alpha-1,6-glucosidic linkages in glycogen by scission of a 1,4-alpha-linked oligosaccharide from growing alpha-1,4-glucan chains and the subsequent attachment of the oligosaccharide to the alpha-1,6 position. In Yersinia pseudotuberculosis serotype O:1b (strain IP 31758), this protein is 1,4-alpha-glucan branching enzyme GlgB.